The chain runs to 333 residues: MKLSIRPFVLGIALCTLIGIVAFGLAKIPFFLSLHLSPLILSVLVGMALAPWYKKSGQIGIIGVLWCGKRLLRLGIVLFGFQVTLQSLLGVGVEGFLIALLVVAGIFTLGSYLGVKLLGLDRETSMLIACGSAVCGAAAILALESLSKTPAHKTAIAVGVVVLFGLLSMFLYPLVYEAGFIPLSPLQEGIYTGATLHEVANVIGASANLPKEAQEAAVIVKMIRVILLVPLLLLLSFTILKHREKGSNEVAIPWFALLFLGAILLGSLFFFPSWLRSLLQSGSLFSLTLAMGALGLVSDFSKLQGVGAKALALGAILWGVLLFGGLGLVKLLA.

9 helical membrane-spanning segments follow: residues 4–26, 31–53, 59–81, 88–110, 125–147, 154–176, 218–240, 253–275, and 310–332; these read SIRPFVLGIALCTLIGIVAFGLA, FLSLHLSPLILSVLVGMALAPWY, IGIIGVLWCGKRLLRLGIVLFGF, LLGVGVEGFLIALLVVAGIFTLG, SMLIACGSAVCGAAAILALESLS, TAIAVGVVVLFGLLSMFLYPLVY, VIVKMIRVILLVPLLLLLSFTIL, PWFALLFLGAILLGSLFFFPSWL, and ALALGAILWGVLLFGGLGLVKLL.

The protein belongs to the UPF0324 family.

It is found in the cell membrane. The chain is UPF0324 membrane protein WS2204 from Wolinella succinogenes (strain ATCC 29543 / DSM 1740 / CCUG 13145 / JCM 31913 / LMG 7466 / NCTC 11488 / FDC 602W) (Vibrio succinogenes).